Reading from the N-terminus, the 1036-residue chain is DNA-directed RNA polymerase subunit beta (1036 aa).

Belongs to the RNA polymerase beta chain family. As to quaternary structure, in plastids the minimal PEP RNA polymerase catalytic core is composed of four subunits: alpha, beta, beta', and beta''. When a (nuclear-encoded) sigma factor is associated with the core the holoenzyme is formed, which can initiate transcription.

It localises to the plastid. The protein localises to the chloroplast. It catalyses the reaction RNA(n) + a ribonucleoside 5'-triphosphate = RNA(n+1) + diphosphate. Functionally, DNA-dependent RNA polymerase catalyzes the transcription of DNA into RNA using the four ribonucleoside triphosphates as substrates. This is DNA-directed RNA polymerase subunit beta from Cyanidioschyzon merolae (strain NIES-3377 / 10D) (Unicellular red alga).